A 308-amino-acid chain; its full sequence is Pantothenate synthetase (308 aa).

ATP is bound at residue 39–46 (MGALHDGH). The Proton donor role is filled by His-46. Position 71 (Gln-71) interacts with (R)-pantoate. Position 71 (Gln-71) interacts with beta-alanine. Position 157–160 (157–160 (GEKD)) interacts with ATP. Position 163 (Gln-163) interacts with (R)-pantoate. ATP-binding positions include Val-186 and 194–197 (MSSR). Residues 286–308 (IETPAGTAGPDGDRQYAQSPWRN) form a disordered region.

The protein belongs to the pantothenate synthetase family. In terms of assembly, homodimer.

Its subcellular location is the cytoplasm. The catalysed reaction is (R)-pantoate + beta-alanine + ATP = (R)-pantothenate + AMP + diphosphate + H(+). It participates in cofactor biosynthesis; (R)-pantothenate biosynthesis; (R)-pantothenate from (R)-pantoate and beta-alanine: step 1/1. Its function is as follows. Catalyzes the condensation of pantoate with beta-alanine in an ATP-dependent reaction via a pantoyl-adenylate intermediate. The chain is Pantothenate synthetase from Mycolicibacterium paratuberculosis (strain ATCC BAA-968 / K-10) (Mycobacterium paratuberculosis).